An 803-amino-acid polypeptide reads, in one-letter code: Phosphoribosylformylglycinamidine synthase subunit PurL (803 aa).

Residue H65 is part of the active site. The ATP site is built by Y68 and K107. E109 serves as a coordination point for Mg(2+). Substrate contacts are provided by residues 110 to 113 (SHNH) and R132. H111 acts as the Proton acceptor in catalysis. Residue D133 coordinates Mg(2+). A substrate-binding site is contributed by Q256. Residue D284 coordinates Mg(2+). 328 to 330 (ESQ) serves as a coordination point for substrate. The ATP site is built by N537 and G574. Residue N575 participates in Mg(2+) binding. S577 is a binding site for substrate.

This sequence belongs to the FGAMS family. In terms of assembly, monomer. Part of the FGAM synthase complex composed of 1 PurL, 1 PurQ and 2 PurS subunits.

The protein localises to the cytoplasm. It carries out the reaction N(2)-formyl-N(1)-(5-phospho-beta-D-ribosyl)glycinamide + L-glutamine + ATP + H2O = 2-formamido-N(1)-(5-O-phospho-beta-D-ribosyl)acetamidine + L-glutamate + ADP + phosphate + H(+). The protein operates within purine metabolism; IMP biosynthesis via de novo pathway; 5-amino-1-(5-phospho-D-ribosyl)imidazole from N(2)-formyl-N(1)-(5-phospho-D-ribosyl)glycinamide: step 1/2. Part of the phosphoribosylformylglycinamidine synthase complex involved in the purines biosynthetic pathway. Catalyzes the ATP-dependent conversion of formylglycinamide ribonucleotide (FGAR) and glutamine to yield formylglycinamidine ribonucleotide (FGAM) and glutamate. The FGAM synthase complex is composed of three subunits. PurQ produces an ammonia molecule by converting glutamine to glutamate. PurL transfers the ammonia molecule to FGAR to form FGAM in an ATP-dependent manner. PurS interacts with PurQ and PurL and is thought to assist in the transfer of the ammonia molecule from PurQ to PurL. The protein is Phosphoribosylformylglycinamidine synthase subunit PurL of Prochlorococcus marinus (strain NATL2A).